The chain runs to 446 residues: MCATDNAPAANAAPEKPSNVGVEVGHTGEQTNPYGANPADFLSNVSKFQLIESTLREGEQFASAFFDTETKIEIAKALDDFGVDYIELTSPAASEQSRSDCEAICKLGLKAKILTHIRCHMDDARLAVSTGVDGVDVVIGTSQFLRQYSHGKDMNYIAQSAVEVIEFVKSHGIEIRFSSEDSFRSDLVDLLNIYRTVDKIGVNRVGIADTVGCANPRQVYELVRTLKSVVSCDIECHFHNDTGCAIANAYTALEAGANLIDVSVLGIGERNGITSLGGLMARMIAADRDYVLSKYKLHKLRDLENLVADAVQVNIPFNNPITGFCAFTHKAGIHAKAILANPSTYEILNPADFGLTRYIHFANRLTGWNAIKSRVDQLNLHLTDAQCKDVTAKIKKLGDVRSLNIDDVDSIIREFHADVTSTPTVAATEGPAVEDEPAAKKAKTEE.

Residues 1 to 14 (MCATDNAPAANAAP) are compositionally biased toward low complexity. The disordered stretch occupies residues 1–36 (MCATDNAPAANAAPEKPSNVGVEVGHTGEQTNPYGA). The region spanning 48–307 (FQLIESTLRE…HKLRDLENLV (260 aa)) is the Pyruvate carboxyltransferase domain. Residue Arg56 coordinates 2-oxoglutarate. A Mg(2+)-binding site is contributed by Glu57. His116, Arg176, and Thr210 together coordinate 2-oxoglutarate. His237 and His239 together coordinate Mg(2+). His334 functions as the Proton acceptor in the catalytic mechanism. The disordered stretch occupies residues 422–446 (TPTVAATEGPAVEDEPAAKKAKTEE). Basic and acidic residues predominate over residues 437 to 446 (PAAKKAKTEE).

Belongs to the alpha-IPM synthase/homocitrate synthase family. Homocitrate synthase LYS20/LYS21 subfamily. Mg(2+) is required as a cofactor. Mn(2+) serves as cofactor.

It localises to the mitochondrion. The enzyme catalyses acetyl-CoA + 2-oxoglutarate + H2O = (2R)-homocitrate + CoA + H(+). Its pathway is amino-acid biosynthesis; L-lysine biosynthesis via AAA pathway; L-alpha-aminoadipate from 2-oxoglutarate: step 1/5. Catalyzes the aldol-type condensation of 2-oxoglutarate with acetyl-CoA to yield homocitrate. Carries out the first step of the alpha-aminoadipate (AAA) lysine biosynthesis pathway. The polypeptide is Homocitrate synthase, mitochondrial (LYS1) (Yarrowia lipolytica (strain CLIB 122 / E 150) (Yeast)).